We begin with the raw amino-acid sequence, 115 residues long: Non-specific lipid-transfer protein (115 aa).

Residues 1 to 24 form the signal peptide; the sequence is MASSAVIKLALVVALCMAVSVAHA. Disulfide bonds link cysteine 27/cysteine 74, cysteine 37/cysteine 51, cysteine 52/cysteine 97, and cysteine 72/cysteine 111.

Belongs to the plant LTP family.

Functionally, plant non-specific lipid-transfer proteins transfer phospholipids as well as galactolipids across membranes. May play a role in wax or cutin deposition in the cell walls of expanding epidermal cells and certain secretory tissues. The protein is Non-specific lipid-transfer protein of Pyrus communis (Pear).